Here is a 129-residue protein sequence, read N- to C-terminus: Lysozyme C (129 aa).

A C-type lysozyme domain is found at 1 to 129 (KVYGRCELAA…VNAWIRGCRL (129 aa)). Intrachain disulfides connect Cys-6–Cys-127, Cys-30–Cys-115, Cys-64–Cys-80, and Cys-76–Cys-94. Active-site residues include Glu-35 and Asp-52.

The protein belongs to the glycosyl hydrolase 22 family. In terms of assembly, monomer.

It is found in the secreted. The catalysed reaction is Hydrolysis of (1-&gt;4)-beta-linkages between N-acetylmuramic acid and N-acetyl-D-glucosamine residues in a peptidoglycan and between N-acetyl-D-glucosamine residues in chitodextrins.. Lysozymes have primarily a bacteriolytic function; those in tissues and body fluids are associated with the monocyte-macrophage system and enhance the activity of immunoagents. The polypeptide is Lysozyme C (LYZ) (Syrmaticus reevesii (Reeves's pheasant)).